The chain runs to 546 residues: Metal transporter Nramp6.2 (546 aa).

Helical transmembrane passes span 50 to 70 (FLPYVGPGFLVSLAYLDPGNL), 83 to 103 (ELLWVILIGLIFALIIQSLAA), 128 to 150 (SLWLLAEVAVIAADIPEVIGTAF), 154 to 176 (ILFHIPVWAGVLMTGLSTLLLLG), 187 to 207 (LLISALVFTMAACFFGELSYV), 233 to 253 (IALLGALVMPHNLFLHSALVL), 270 to 290 (YFLIESGFALFVAFLINVSII), and 333 to 353 (IYAIALLASGQSSTITGTYAG). Asn371 is a glycosylation site (N-linked (GlcNAc...) asparagine). 4 helical membrane passes run 374–394 (TRCIAILPSLFVSIIGGSSGA), 397–417 (LIIIASMILSFELPFALIPLL), 433–453 (IYIIVISWTLGFMIIGINVYY), and 473–493 (VIIGIIVFPLMAIYILAIIYL).

It belongs to the NRAMP (TC 2.A.55) family.

It is found in the membrane. Probable divalent metal transporter. The protein is Metal transporter Nramp6.2 of Populus trichocarpa (Western balsam poplar).